We begin with the raw amino-acid sequence, 235 residues long: MOB kinase activator 2 (235 aa).

The tract at residues 1–22 (MDWLMGKSKAKPNGKKPAAEEK) is disordered. Zn(2+) is bound by residues C78, C83, H157, and H162. The segment at 213–235 (NSGATGDGANSGASGAQNHVKER) is disordered.

Belongs to the MOB1/phocein family. As to quaternary structure, binds STK38 and STK38L. Post-translationally, phosphorylated.

The protein localises to the nucleus. The protein resides in the cytoplasm. It is found in the perinuclear region. Stimulates the autophosphorylation and kinase activity of STK38 and STK38L. This is MOB kinase activator 2 (Mob2) from Mus musculus (Mouse).